We begin with the raw amino-acid sequence, 457 residues long: ATP synthase subunit beta (457 aa).

An ATP-binding site is contributed by 147-154 (GGAGVGKT).

This sequence belongs to the ATPase alpha/beta chains family. As to quaternary structure, F-type ATPases have 2 components, CF(1) - the catalytic core - and CF(0) - the membrane proton channel. CF(1) has five subunits: alpha(3), beta(3), gamma(1), delta(1), epsilon(1). CF(0) has three main subunits: a(1), b(2) and c(9-12). The alpha and beta chains form an alternating ring which encloses part of the gamma chain. CF(1) is attached to CF(0) by a central stalk formed by the gamma and epsilon chains, while a peripheral stalk is formed by the delta and b chains.

Its subcellular location is the cell inner membrane. The catalysed reaction is ATP + H2O + 4 H(+)(in) = ADP + phosphate + 5 H(+)(out). Its function is as follows. Produces ATP from ADP in the presence of a proton gradient across the membrane. The catalytic sites are hosted primarily by the beta subunits. The polypeptide is ATP synthase subunit beta (Haemophilus ducreyi (strain 35000HP / ATCC 700724)).